We begin with the raw amino-acid sequence, 260 residues long: MASHEQALILEPAGELRFKGPFTDVVTADLKLSNPTDRRICFKVKTTAPKRYCVRPNSGILEPKTSIAVAVMLQPFNYDPNEKNKHKFMVQSMYAPDHVVESQELLWKDAPPESLMDTKLRCVFEMPDGSHQAPASDASRATDAGAHFSESALEDPTVASRKTETQSPKRVGAVGSAGEDVKKLQHELKKAQSEITSLKGENSQLKDEGIRLRKVAMTDTVSPTPLNPSPAPAAAVRAFPPVVYVVAAIILGLIIGKFLL.

Topologically, residues 1-238 are cytoplasmic; sequence MASHEQALIL…SPAPAAAVRA (238 aa). One can recognise an MSP domain in the interval 7–125; that stretch reads ALILEPAGEL…MDTKLRCVFE (119 aa). Residues 127 to 177 form a disordered region; that stretch reads PDGSHQAPASDASRATDAGAHFSESALEDPTVASRKTETQSPKRVGAVGSA. A coiled-coil region spans residues 172-216; sequence GAVGSAGEDVKKLQHELKKAQSEITSLKGENSQLKDEGIRLRKVA. Residues 239-259 traverse the membrane as a helical; Anchor for type IV membrane protein segment; that stretch reads FPPVVYVVAAIILGLIIGKFL.

It belongs to the VAMP-associated protein (VAP) (TC 9.B.17) family. As to expression, detected only in the central nervous system and the gill of aplysia.

The protein localises to the membrane. It localises to the synapse. It is found in the synaptosome. Its function is as follows. Required for neurotransmitter release. Interacts with VAMP. This chain is Vesicle-associated membrane protein/synaptobrevin-binding protein, found in Aplysia californica (California sea hare).